Reading from the N-terminus, the 348-residue chain is Nicotinate-nucleotide--dimethylbenzimidazole phosphoribosyltransferase (348 aa).

Residue Glu-316 is the Proton acceptor of the active site.

Belongs to the CobT family.

The enzyme catalyses 5,6-dimethylbenzimidazole + nicotinate beta-D-ribonucleotide = alpha-ribazole 5'-phosphate + nicotinate + H(+). It participates in nucleoside biosynthesis; alpha-ribazole biosynthesis; alpha-ribazole from 5,6-dimethylbenzimidazole: step 1/2. Catalyzes the synthesis of alpha-ribazole-5'-phosphate from nicotinate mononucleotide (NAMN) and 5,6-dimethylbenzimidazole (DMB). The chain is Nicotinate-nucleotide--dimethylbenzimidazole phosphoribosyltransferase from Xanthomonas oryzae pv. oryzae (strain PXO99A).